A 381-amino-acid chain; its full sequence is Creatine kinase M-type (381 aa).

The region spanning 11–98 (KLNYSAAEEF…FDPVIEDRHG (88 aa)) is the Phosphagen kinase N-terminal domain. The 243-residue stretch at 125-367 (YVLSSRVRTG…KLMVEMEKRL (243 aa)) folds into the Phosphagen kinase C-terminal domain. ATP is bound by residues 128–132 (SSRVR), histidine 191, arginine 236, arginine 292, 320–325 (RGTGGV), and aspartate 335.

It belongs to the ATP:guanido phosphotransferase family. Dimer of identical or non-identical chains. With MM being the major form in skeletal muscle and myocardium, MB existing in myocardium, and BB existing in many tissues, especially brain.

It is found in the cytoplasm. The catalysed reaction is creatine + ATP = N-phosphocreatine + ADP + H(+). Reversibly catalyzes the transfer of phosphate between ATP and various phosphogens (e.g. creatine phosphate). Creatine kinase isoenzymes play a central role in energy transduction in tissues with large, fluctuating energy demands, such as skeletal muscle, heart, brain and spermatozoa. This chain is Creatine kinase M-type, found in Tetronarce californica (Pacific electric ray).